Here is a 2055-residue protein sequence, read N- to C-terminus: Protein PHOTOPERIOD-INDEPENDENT EARLY FLOWERING 1 (2055 aa).

The segment at 1-47 (MASKGGKSKPDIVMASKSGKSKPDNESRAKRQKTLEAPKEPRRPKTH) is disordered. Basic and acidic residues predominate over residues 21-47 (SKPDNESRAKRQKTLEAPKEPRRPKTH). The short motif at 29-36 (AKRQKTLE) is the Nuclear localization signal 1 element. An HSA domain is found at 35–107 (LEAPKEPRRP…EEQRLRKVAL (73 aa)). Coiled-coil stretches lie at residues 78–147 (LRAS…LEFL) and 229–250 (EEDE…LQNE). Disordered regions lie at residues 183–332 (KSDE…SNDS) and 340–359 (ETHS…KSRK). Over residues 208-230 (ELDEDYDLKSEDETEDDEDTIEE) the composition is skewed to acidic residues. 2 stretches are compositionally biased toward basic and acidic residues: residues 231 to 243 (DEKH…RQEE) and 267 to 276 (VSRETSPVKD). A coiled-coil region spans residues 392–416 (EEELAKADNEDHVEEIALLQKESEM). The interval 432–461 (KDISEDESESSFAVSEDSIVDSDENRQQAD) is disordered. The Helicase ATP-binding domain occupies 548 to 713 (VTMYEKKLNG…WSLMHFLMPH (166 aa)). 561 to 568 (DEMGLGKT) provides a ligand contact to ATP. A DEAH box motif is present at residues 664 to 667 (DEAH). A Helicase C-terminal domain is found at 1076 to 1229 (KLQELAMLLR…NLVIQNGEYN (154 aa)). The tract at residues 1293-1313 (EEAVDNQEFTEEPVERPEDDE) is disordered. The stretch at 1419 to 1492 (FEEKEWELDH…EREAAEVAEM (74 aa)) forms a coiled coil. 2 short sequence motifs (nuclear localization signal) span residues 1506-1513 (KKKKKAKK) and 1570-1577 (KKRDLIVD). The segment at 1577–1597 (DTDEEKTSKKKAKKHKKSLPN) is disordered. The segment covering 1584-1594 (SKKKAKKHKKS) has biased composition (basic residues). The Myb-like domain maps to 1673–1727 (SWLPQEDAILCAMVHEYGPNWNFVSGTLYGMTAGGAYRGRYRHPAYCCERYRELI). Disordered stretches follow at residues 1843-1864 (ALQD…LQET) and 1951-1977 (KSRT…STKS). The span at 1844–1864 (LQDSGPSQPDNTISRSRLQET) shows a compositional bias: polar residues. Positions 2006 to 2029 (GDREEEEEQEVDEKANSAEIEMIS) form a coiled coil.

Belongs to the SNF2/RAD54 helicase family. SWR1 subfamily. In terms of assembly, component of the SWR1 chromatin-remodeling complex composed of at least ARP6/ESD1/SUF3, PIE1, SWC6, SWC2 and H2AZs (HTA8, HTA9, HTA11). Interacts (via c-terminus) with SWC6 and ARP6 and (via N-terminus) with H2AZs. As to expression, expressed in ovules, but not in stamens.

The protein resides in the nucleus. It carries out the reaction ATP + H2O = ADP + phosphate + H(+). Its function is as follows. Component of the SWR1 complex which mediates the ATP-dependent exchange of histone H2A for the H2A variant H2A.F/Z leading to transcriptional regulation of selected genes (e.g. FLC) by chromatin remodeling. Probable DNA-dependent ATPase. Not involved in the repression of FLC in gametophytes, but required for the reactivation of FLC in early embryos and for the maintenance of full activation of FLC in late embryos. The protein is Protein PHOTOPERIOD-INDEPENDENT EARLY FLOWERING 1 (PIE1) of Arabidopsis thaliana (Mouse-ear cress).